A 115-amino-acid polypeptide reads, in one-letter code: Large ribosomal subunit protein bL19 (115 aa).

It belongs to the bacterial ribosomal protein bL19 family.

This protein is located at the 30S-50S ribosomal subunit interface and may play a role in the structure and function of the aminoacyl-tRNA binding site. This is Large ribosomal subunit protein bL19 (rplS) from Buchnera aphidicola subsp. Acyrthosiphon pisum (strain APS) (Acyrthosiphon pisum symbiotic bacterium).